A 356-amino-acid chain; its full sequence is Protein-glutamate methylesterase/protein-glutamine glutaminase 2 (356 aa).

Positions 4–121 (RALVVDDSAL…SQSMPEMAEE (118 aa)) constitute a Response regulatory domain. 4-aspartylphosphate is present on Asp-55. Residues 161–356 (KAAPRNILAI…MAEEIIRIIG (196 aa)) enclose the CheB-type methylesterase domain. Catalysis depends on residues Ser-173, His-200, and Asp-300.

Belongs to the CheB family. In terms of processing, phosphorylated by CheA. Phosphorylation of the N-terminal regulatory domain activates the methylesterase activity.

It localises to the cytoplasm. The catalysed reaction is [protein]-L-glutamate 5-O-methyl ester + H2O = L-glutamyl-[protein] + methanol + H(+). It carries out the reaction L-glutaminyl-[protein] + H2O = L-glutamyl-[protein] + NH4(+). Functionally, involved in chemotaxis. Part of a chemotaxis signal transduction system that modulates chemotaxis in response to various stimuli. Catalyzes the demethylation of specific methylglutamate residues introduced into the chemoreceptors (methyl-accepting chemotaxis proteins or MCP) by CheR. Also mediates the irreversible deamidation of specific glutamine residues to glutamic acid. This chain is Protein-glutamate methylesterase/protein-glutamine glutaminase 2, found in Methanosarcina acetivorans (strain ATCC 35395 / DSM 2834 / JCM 12185 / C2A).